The primary structure comprises 440 residues: Ribulose bisphosphate carboxylase large chain (440 aa).

An N6,N6,N6-trimethyllysine modification is found at K4. Substrate contacts are provided by N113 and T163. K165 serves as the catalytic Proton acceptor. K167 provides a ligand contact to substrate. 3 residues coordinate Mg(2+): K191, D193, and E194. Residue K191 is modified to N6-carboxylysine. Catalysis depends on H284, which acts as the Proton acceptor. The substrate site is built by R285, H317, and S369.

It belongs to the RuBisCO large chain family. Type I subfamily. Heterohexadecamer of 8 large chains and 8 small chains; disulfide-linked. The disulfide link is formed within the large subunit homodimers. Requires Mg(2+) as cofactor. Post-translationally, the disulfide bond which can form in the large chain dimeric partners within the hexadecamer appears to be associated with oxidative stress and protein turnover.

It is found in the plastid. The protein localises to the chloroplast. It carries out the reaction 2 (2R)-3-phosphoglycerate + 2 H(+) = D-ribulose 1,5-bisphosphate + CO2 + H2O. The catalysed reaction is D-ribulose 1,5-bisphosphate + O2 = 2-phosphoglycolate + (2R)-3-phosphoglycerate + 2 H(+). Functionally, ruBisCO catalyzes two reactions: the carboxylation of D-ribulose 1,5-bisphosphate, the primary event in carbon dioxide fixation, as well as the oxidative fragmentation of the pentose substrate in the photorespiration process. Both reactions occur simultaneously and in competition at the same active site. This Onoclea sensibilis (Sensitive fern) protein is Ribulose bisphosphate carboxylase large chain.